The sequence spans 158 residues: UPF0311 protein CA_C3321 (158 aa).

It belongs to the UPF0311 family.

In Clostridium acetobutylicum (strain ATCC 824 / DSM 792 / JCM 1419 / IAM 19013 / LMG 5710 / NBRC 13948 / NRRL B-527 / VKM B-1787 / 2291 / W), this protein is UPF0311 protein CA_C3321.